The following is a 124-amino-acid chain: Small ribosomal subunit protein uS12 (124 aa).

The tract at residues Met1–Gly32 is disordered. Asp89 carries the post-translational modification 3-methylthioaspartic acid. A disordered region spans residues Thr104 to Ser124. A compositionally biased stretch (basic residues) spans Lys108–Gly118.

It belongs to the universal ribosomal protein uS12 family. Part of the 30S ribosomal subunit. Contacts proteins S8 and S17. May interact with IF1 in the 30S initiation complex.

With S4 and S5 plays an important role in translational accuracy. Its function is as follows. Interacts with and stabilizes bases of the 16S rRNA that are involved in tRNA selection in the A site and with the mRNA backbone. Located at the interface of the 30S and 50S subunits, it traverses the body of the 30S subunit contacting proteins on the other side and probably holding the rRNA structure together. The combined cluster of proteins S8, S12 and S17 appears to hold together the shoulder and platform of the 30S subunit. The chain is Small ribosomal subunit protein uS12 from Rhodococcus erythropolis (strain PR4 / NBRC 100887).